Reading from the N-terminus, the 149-residue chain is Small ribosomal subunit protein bS18c (149 aa).

The tract at residues 1 to 23 (MDKITGPFRKSKKSFRKPLPPIQ) is disordered.

This sequence belongs to the bacterial ribosomal protein bS18 family. As to quaternary structure, part of the 30S ribosomal subunit.

The protein localises to the plastid. This Cuscuta obtusiflora (Peruvian dodder) protein is Small ribosomal subunit protein bS18c.